Reading from the N-terminus, the 419-residue chain is tRNA modification GTPase MnmE (419 aa).

Residues R20, E76, and R115 each contribute to the (6S)-5-formyl-5,6,7,8-tetrahydrofolate site. The region spanning G211 to R348 is the TrmE-type G domain. K(+) is bound at residue N221. Residues N221–T226, S240–T246, and D265–G268 contribute to the GTP site. S225 contributes to the Mg(2+) binding site. K(+) is bound by residues S240, I242, and T245. T246 is a Mg(2+) binding site. K419 is a binding site for (6S)-5-formyl-5,6,7,8-tetrahydrofolate.

It belongs to the TRAFAC class TrmE-Era-EngA-EngB-Septin-like GTPase superfamily. TrmE GTPase family. In terms of assembly, homodimer. Heterotetramer of two MnmE and two MnmG subunits. The cofactor is K(+).

The protein localises to the cytoplasm. Functionally, exhibits a very high intrinsic GTPase hydrolysis rate. Involved in the addition of a carboxymethylaminomethyl (cmnm) group at the wobble position (U34) of certain tRNAs, forming tRNA-cmnm(5)s(2)U34. The polypeptide is tRNA modification GTPase MnmE (Paracoccus denitrificans (strain Pd 1222)).